We begin with the raw amino-acid sequence, 92 residues long: Putative protein IntG (92 aa).

Belongs to the 'phage' integrase family.

The polypeptide is Putative protein IntG (intG) (Escherichia coli (strain K12)).